The primary structure comprises 129 residues: Succinate dehydrogenase subunit 3-2, mitochondrial (129 aa).

The transit peptide at 1–58 (MEKYQSKARFAPLSDAPFALRGALGSSNSSFNNIDHLRQSSSSGQARSYTSSPLGALR) directs the protein to the mitochondrion. Positions 27-53 (SNSSFNNIDHLRQSSSSGQARSYTSSP) are enriched in polar residues. Positions 27 to 66 (SNSSFNNIDHLRQSSSSGQARSYTSSPLGALRPKMFPSGN) are disordered. Histidine 87 serves as a coordination point for heme. Residues 105–127 (IFGAALGAVIISIPLATKFSLMF) traverse the membrane as a helical segment.

Component of complex II composed of eight subunits in plants: four classical SDH subunits SDH1, SDH2, SDH3 and SDH4 (a flavoprotein (FP), an iron-sulfur protein (IP), and a cytochrome b composed of a large and a small subunit.), as well as four subunits unknown in mitochondria from bacteria and heterotrophic eukaryotes. Requires heme as cofactor.

The protein resides in the mitochondrion inner membrane. The protein operates within carbohydrate metabolism; tricarboxylic acid cycle. In terms of biological role, membrane-anchoring subunit of succinate dehydrogenase (SDH). In Oryza sativa subsp. japonica (Rice), this protein is Succinate dehydrogenase subunit 3-2, mitochondrial.